Consider the following 626-residue polypeptide: Chaperone protein DnaK (626 aa).

At Thr175 the chain carries Phosphothreonine; by autocatalysis. Residues 586–606 (GAEGAAAGADGAGASAGSASG) are compositionally biased toward low complexity. A disordered region spans residues 586-626 (GAEGAAAGADGAGASAGSASGSDDDTVEAEVVDDDDDKDNK). Positions 607-626 (SDDDTVEAEVVDDDDDKDNK) are enriched in acidic residues.

It belongs to the heat shock protein 70 family.

Its function is as follows. Acts as a chaperone. The chain is Chaperone protein DnaK from Bifidobacterium longum (strain DJO10A).